Consider the following 190-residue polypeptide: MRAFKVKRDTNETKIQLELNIDGTGKYSITTGIPFFDHVLSSFAKHGSFDLKLDVLGDLEIDDHHTVEDVGIVLGKAFENMEKKNIKRFGWAIIPMDEAKATVSIDIGGRPFVVGNYVPNTERIGSFSTENVVHFFESFSNNAKINLHFEVTGENEHHKVEALFKAFGVAMDMATQIDERKGIVSTKGVI.

This sequence belongs to the imidazoleglycerol-phosphate dehydratase family.

The protein resides in the cytoplasm. The enzyme catalyses D-erythro-1-(imidazol-4-yl)glycerol 3-phosphate = 3-(imidazol-4-yl)-2-oxopropyl phosphate + H2O. The protein operates within amino-acid biosynthesis; L-histidine biosynthesis; L-histidine from 5-phospho-alpha-D-ribose 1-diphosphate: step 6/9. The protein is Imidazoleglycerol-phosphate dehydratase of Methanococcus maripaludis (strain DSM 14266 / JCM 13030 / NBRC 101832 / S2 / LL).